Reading from the N-terminus, the 173-residue chain is NADH-ubiquinone oxidoreductase chain 6 (173 aa).

Helical transmembrane passes span 1 to 21 (MTYLVSLLLMALIVGLIAVAS), 24 to 44 (APYFAALGLVVAAGVGCGVLV), 53 to 73 (LVLFLIYLGGMLVVFAYSAAL), 86 to 106 (SVVGYVMIYLLGVGLMVGVFW), and 139 to 159 (YGGGMLVICAWVLLLTLFVVL).

It belongs to the complex I subunit 6 family.

The protein localises to the mitochondrion membrane. The catalysed reaction is a ubiquinone + NADH + 5 H(+)(in) = a ubiquinol + NAD(+) + 4 H(+)(out). Core subunit of the mitochondrial membrane respiratory chain NADH dehydrogenase (Complex I) that is believed to belong to the minimal assembly required for catalysis. Complex I functions in the transfer of electrons from NADH to the respiratory chain. The immediate electron acceptor for the enzyme is believed to be ubiquinone. The polypeptide is NADH-ubiquinone oxidoreductase chain 6 (MT-ND6) (Formosania lacustris (Oriental stream loach)).